A 453-amino-acid chain; its full sequence is Ribulose bisphosphate carboxylase large chain (453 aa).

Residues 1–2 (MS) constitute a propeptide that is removed on maturation. At Pro3 the chain carries N-acetylproline. At Lys14 the chain carries N6,N6,N6-trimethyllysine. Substrate is bound by residues Asn123 and Thr173. The Proton acceptor role is filled by Lys175. Lys177 is a binding site for substrate. 3 residues coordinate Mg(2+): Lys201, Asp203, and Glu204. At Lys201 the chain carries N6-carboxylysine. Catalysis depends on His294, which acts as the Proton acceptor. Substrate-binding residues include Arg295, His327, and Ser379.

Belongs to the RuBisCO large chain family. Type I subfamily. As to quaternary structure, heterohexadecamer of 8 large chains and 8 small chains; disulfide-linked. The disulfide link is formed within the large subunit homodimers. Requires Mg(2+) as cofactor. In terms of processing, the disulfide bond which can form in the large chain dimeric partners within the hexadecamer appears to be associated with oxidative stress and protein turnover.

It localises to the plastid. It is found in the chloroplast. It carries out the reaction 2 (2R)-3-phosphoglycerate + 2 H(+) = D-ribulose 1,5-bisphosphate + CO2 + H2O. It catalyses the reaction D-ribulose 1,5-bisphosphate + O2 = 2-phosphoglycolate + (2R)-3-phosphoglycerate + 2 H(+). In terms of biological role, ruBisCO catalyzes two reactions: the carboxylation of D-ribulose 1,5-bisphosphate, the primary event in carbon dioxide fixation, as well as the oxidative fragmentation of the pentose substrate in the photorespiration process. Both reactions occur simultaneously and in competition at the same active site. The polypeptide is Ribulose bisphosphate carboxylase large chain (Galium corsicum).